Consider the following 346-residue polypeptide: Carbamoyl phosphate synthase small chain (346 aa).

The CPSase stretch occupies residues 1-160 (MEDGSVFAGR…SVKEPVLLGE (160 aa)). L-glutamine is bound by residues serine 39, glycine 209, and glycine 211. Residues 164–346 (CIGVVDCGVK…FLKLVERHGH (183 aa)) enclose the Glutamine amidotransferase type-1 domain. The Nucleophile role is filled by cysteine 237. L-glutamine-binding residues include leucine 238, glutamine 241, asparagine 280, glycine 282, and tyrosine 283. Residues histidine 320 and glutamate 322 contribute to the active site.

Belongs to the CarA family. In terms of assembly, composed of two chains; the small (or glutamine) chain promotes the hydrolysis of glutamine to ammonia, which is used by the large (or ammonia) chain to synthesize carbamoyl phosphate. Tetramer of heterodimers (alpha,beta)4.

It carries out the reaction hydrogencarbonate + L-glutamine + 2 ATP + H2O = carbamoyl phosphate + L-glutamate + 2 ADP + phosphate + 2 H(+). The catalysed reaction is L-glutamine + H2O = L-glutamate + NH4(+). Its pathway is amino-acid biosynthesis; L-arginine biosynthesis; carbamoyl phosphate from bicarbonate: step 1/1. It functions in the pathway pyrimidine metabolism; UMP biosynthesis via de novo pathway; (S)-dihydroorotate from bicarbonate: step 1/3. Its function is as follows. Small subunit of the glutamine-dependent carbamoyl phosphate synthetase (CPSase). CPSase catalyzes the formation of carbamoyl phosphate from the ammonia moiety of glutamine, carbonate, and phosphate donated by ATP, constituting the first step of 2 biosynthetic pathways, one leading to arginine and/or urea and the other to pyrimidine nucleotides. The small subunit (glutamine amidotransferase) binds and cleaves glutamine to supply the large subunit with the substrate ammonia. This chain is Carbamoyl phosphate synthase small chain, found in Pyrobaculum aerophilum (strain ATCC 51768 / DSM 7523 / JCM 9630 / CIP 104966 / NBRC 100827 / IM2).